A 1500-amino-acid polypeptide reads, in one-letter code: MPVRPDLQQLEKCIDDALRKNDFKPLLALLQIDICEDVKIKCSKQFLRKLDDLICRELNKKDIQTVSSILISIGRCSKNIFILGQAGLQTMIKQGLVQKMVSWFENSKEIILNQQQSKDEAVMNMIEDLFDLLMVIYDISDEGKNQVLESFIPQICALVIDSRVNFCIQQEALKKMNLMLDRIPQDANKILSNQEMLTLMSNMGERILDVGDYELQVGIVEALCRMTTEKRRQELAYEWFSMDFIANAFKEIKDCEFETDCRIFLNLVNGILGDKRRVYTFPCLSAFLGKYELQIPSDEKLEEFWIDFNLGSHTLSFYIAGDEEDHQWEAVTVPEEKVQMYNIEVRESKKLLTLTLKNIVKISKKEGKELLFYFDESLEITNVTKKVFGGNKYKEFTRKQGISVAKTSIHVLFDASGSQILVPESQPSPVKENLIHLKEKSDIQKKLVNPLELGNSSSQDEITTPSRKKMSEASMIVPDTDRYTVRSPILLINTSTPRRSREPLQAINSVEKAVSKTSESGMDYAASPKSRQSDGRKRWNNRANHNKTTAVIQNKQYEDNESPDQNFNEIEDTLSNVSSAVGKVDKPVLPGVLDISKNTTHSRWACWTPVTTIKLCNNQRSRALPGDTCTQDTGVNKKCTKQKSVSDDDSEETQKGKYSKDVIKCNKSDEAEFCERNIQEQNHPKYSQKKNTANAKKSDWHIESETTYKSVLLNKTTEESLIYKKTCVLSKDVNTTICDKSPSRKSKRNHTKSRKELMSELTSCELEEIPVRENSKGKRFTGASESLINQISRRYNPSDSMMSTRKLKEPQDGSGFSKKPDLQFNKVQRKSYRKLKATVVNVTSECPLDDVYNFSLNGADEPVIKLGIQEFQATTREASMDNSLKLVKNHDEHDPFLKTKDKRMLSYEKKTLLSDTETECGCDDSKTDISWLKEPKTKRLMDYSRNKNTTKYKSRKSRSSMEKGQPRPTMVLNKNSMKNDYEVVVDGRTRLPRRATKTKKNYKDLSTSESESESEKECSYLFKDKLPTKEETIHSRAQTKKLPEKQQKVFNSEALKGQPSEEQKNSSRLREGREDSLCLSSASVSRSSSSVEVMRCTEKITERDFTQDYDYITKSLSPYPKAPSPEFLNGNNSVVGRGQSPRISETSAMCVRKSYSPASGPPFSPRHTPTKNNSVVNMKKANSVINNQRTQHCNSYSDVSSNSSEKLYMEPESPESCDNHMQNKREGNHAASPLSLSSEKIEKMWFDMPSENTHVSGPSQRGSKRRMYLEDDELSNSNEAEVEEAEEREHLLSKKRCQWENSDQHTFKTSLSTPDFSVPKDWQQELQGAGMFYDNISSDYKRKTDSQHKIMDDFTTKTLKLTQQHLMAMTSQAQGRRDENVEKFQVTLLDELEKVEKDSQTLRDLEKELVDIEEKLVQKMRAYHRCERERFRVLKTSLDKSFLVYNSVYEESVFTSEMCLMKANMKMLQDKLLKEMHEEEVLNIRRGLQSLFKAHEGNDA.

2 positions are modified to phosphoserine: S457 and S458. At T464 the chain carries Phosphothreonine. S487 is subject to Phosphoserine. The residue at position 496 (T496) is a Phosphothreonine. A phosphoserine mark is found at S500, S509, S518, and S527. The tract at residues 512–548 is disordered; that stretch reads KAVSKTSESGMDYAASPKSRQSDGRKRWNNRANHNKT. Phosphothreonine occurs at positions 608 and 633. Phosphoserine occurs at positions 646, 650, and 741. The interval 796-820 is disordered; the sequence is NPSDSMMSTRKLKEPQDGSGFSKKP. Phosphoserine is present on S914. T916 is modified (phosphothreonine). Disordered stretches follow at residues 940–1010 and 1029–1084; these read LMDY…TSES and KEET…SASV. The span at 948 to 958 shows a compositional bias: basic residues; it reads NTTKYKSRKSR. A compositionally biased stretch (basic and acidic residues) spans 977–989; it reads MKNDYEVVVDGRT. Over residues 990–1000 the composition is skewed to basic residues; that stretch reads RLPRRATKTKK. Basic and acidic residues predominate over residues 1059-1076; it reads PSEEQKNSSRLREGREDS. S1115, S1117, S1124, S1133, S1140, S1144, S1156, S1159, and S1164 each carry phosphoserine. Phosphothreonine is present on T1168. Phosphoserine is present on residues S1183, S1213, and S1216. The tract at residues 1208-1234 is disordered; that stretch reads YMEPESPESCDNHMQNKREGNHAASPL. The segment covering 1217–1228 has biased composition (basic and acidic residues); that stretch reads CDNHMQNKREGN. 3 positions are modified to phosphoserine: S1232, S1275, and S1277. T1313 bears the Phosphothreonine mark. A coiled-coil region spans residues 1388–1429; sequence LLDELEKVEKDSQTLRDLEKELVDIEEKLVQKMRAYHRCERE.

It belongs to the SYCP2 family. In terms of assembly, component of the lateral elements of synaptonemal complexes. Heterodimer with SYCP3. Interacts with SMC1A and SMC3. Interacts with TEX11. In terms of processing, phosphorylated. As to expression, detected in testis and spermatocytes (at protein level).

The protein localises to the nucleus. It localises to the chromosome. Functionally, major component of the axial/lateral elements of synaptonemal complexes (SCS) during meiotic prophase. Plays a role in the assembly of synaptonemal complexes. Required for normal meiotic chromosome synapsis during oocyte and spermatocyte development and for normal male and female fertility. Required for insertion of SYCP3 into synaptonemal complexes. May be involved in the organization of chromatin by temporarily binding to DNA scaffold attachment regions. Requires SYCP3, but not SYCP1, in order to be incorporated into the axial/lateral elements. This is Synaptonemal complex protein 2 (Sycp2) from Mus musculus (Mouse).